A 452-amino-acid polypeptide reads, in one-letter code: 3-phosphoshikimate 1-carboxyvinyltransferase (452 aa).

Residues 1-17 (MSHAAAAKPATARKSQA) are compositionally biased toward low complexity. Positions 1–26 (MSHAAAAKPATARKSQALSGTARVPG) are disordered. 3-phosphoshikimate is bound by residues K28, S29, and R33. Phosphoenolpyruvate is bound at residue K28. Phosphoenolpyruvate contacts are provided by G100 and R128. Residues S174, Q176, D327, and K354 each coordinate 3-phosphoshikimate. Q176 lines the phosphoenolpyruvate pocket. D327 (proton acceptor) is an active-site residue. Residues R358 and R409 each contribute to the phosphoenolpyruvate site.

Belongs to the EPSP synthase family. In terms of assembly, monomer.

The protein resides in the cytoplasm. It carries out the reaction 3-phosphoshikimate + phosphoenolpyruvate = 5-O-(1-carboxyvinyl)-3-phosphoshikimate + phosphate. The protein operates within metabolic intermediate biosynthesis; chorismate biosynthesis; chorismate from D-erythrose 4-phosphate and phosphoenolpyruvate: step 6/7. In terms of biological role, catalyzes the transfer of the enolpyruvyl moiety of phosphoenolpyruvate (PEP) to the 5-hydroxyl of shikimate-3-phosphate (S3P) to produce enolpyruvyl shikimate-3-phosphate and inorganic phosphate. This Mesorhizobium japonicum (strain LMG 29417 / CECT 9101 / MAFF 303099) (Mesorhizobium loti (strain MAFF 303099)) protein is 3-phosphoshikimate 1-carboxyvinyltransferase.